A 1713-amino-acid polypeptide reads, in one-letter code: Serine/threonine-protein kinase MRCK beta (1713 aa).

The 267-residue stretch at 76–342 (FEIIKVIGRG…IEDFKKHAFF (267 aa)) folds into the Protein kinase domain. Residues 82 to 90 (IGRGAFGEV) and Lys105 contribute to the ATP site. Asp200 functions as the Proton acceptor in the catalytic mechanism. Phosphoserine; by autocatalysis is present on residues Ser221 and Ser233. At Thr239 the chain carries Phosphothreonine; by autocatalysis. The region spanning 343–413 (EGLNWENIRN…TTESCFSDRG (71 aa)) is the AGC-kinase C-terminal domain. Thr423 carries the post-translational modification Phosphothreonine. Positions 434-649 (LENSLQIEAY…ASKERKLREH (216 aa)) form a coiled coil. Omega-N-methylarginine is present on Arg671. 2 coiled-coil regions span residues 681–815 (QEIS…AHWE) and 878–939 (ELQS…FRAD). Ser927 carries the phosphoserine modification. Tyr954 is modified (phosphotyrosine). The span at 971 to 994 (ASDQETQASKMDLSPSVSVATSTE) shows a compositional bias: polar residues. The segment at 971–1022 (ASDQETQASKMDLSPSVSVATSTEQQEDMARPQQRPSPVPLPSTQALAMAGP) is disordered. The Phorbol-ester/DAG-type zinc-finger motif lies at 1026 to 1076 (AHQFSIKSFPSPTQCSHCTSLMVGLIRQGYACEVCAFSCHVSCKDSAPQVC). The PH domain occupies 1096 to 1215 (GTAYKGYVKV…WVGILEGLQA (120 aa)). Residues 1241-1515 (IKAVLAAAIV…RPLNSDGSLN (275 aa)) enclose the CNH domain. The CRIB domain maps to 1585-1598 (ISNPTNFNHVAHMG). The segment at 1616 to 1713 (TVQEEKQGPT…EGLDQPSCDA (98 aa)) is disordered. A compositionally biased stretch (basic and acidic residues) spans 1666 to 1677 (DFDKEPDSDSTK). 5 positions are modified to phosphoserine: Ser1682, Ser1684, Ser1688, Ser1692, and Ser1695.

This sequence belongs to the protein kinase superfamily. AGC Ser/Thr protein kinase family. DMPK subfamily. Homodimer and homotetramer via the coiled coil regions. Interacts tightly with GTP-bound but not GDP-bound CDC42. Interacts with TJP1; this interaction requires the presence of catalytically active CDC42. Forms a tripartite complex with MYO18A and LURAP1 with the latter acting as an adapter connecting CDC42BPB and MYO18A. LURAP1 binding results in activation of CDC42BPB by abolition of its negative autoregulation. Interacts with STRIP1, STRN3 and SIKE1. Interacts with CPNE4 (via VWFA domain). Interacts with LURAP1. Interacts (via AGC-kinase C-terminal domain) with FAM89B/LRAP25 (via LRR repeat). Forms a tripartite complex with FAM89B/LRAP25 and LIMK1. The cofactor is Mg(2+). In terms of processing, proteolytically cleaved by caspases upon apoptosis induction.

The protein localises to the cytoplasm. Its subcellular location is the cell membrane. The protein resides in the cell junction. It is found in the cell projection. It localises to the lamellipodium. The catalysed reaction is L-seryl-[protein] + ATP = O-phospho-L-seryl-[protein] + ADP + H(+). It catalyses the reaction L-threonyl-[protein] + ATP = O-phospho-L-threonyl-[protein] + ADP + H(+). Its activity is regulated as follows. Maintained in an inactive, closed conformation by an interaction between the kinase domain and the negative autoregulatory C-terminal coiled-coil region. Agonist binding to the phorbol ester binding site disrupts this, releasing the kinase domain to allow N-terminus-mediated dimerization and kinase activation by transautophosphorylation. Inhibited by chelerythrine chloride. Functionally, serine/threonine-protein kinase which is an important downstream effector of CDC42 and plays a role in the regulation of cytoskeleton reorganization and cell migration. Regulates actin cytoskeletal reorganization via phosphorylation of PPP1R12C and MYL9/MLC2. In concert with MYO18A and LURAP1, is involved in modulating lamellar actomyosin retrograde flow that is crucial to cell protrusion and migration. Phosphorylates PPP1R12A. In concert with FAM89B/LRAP25 mediates the targeting of LIMK1 to the lamellipodium resulting in its activation and subsequent phosphorylation of CFL1 which is important for lamellipodial F-actin regulation. The chain is Serine/threonine-protein kinase MRCK beta from Mus musculus (Mouse).